Here is a 430-residue protein sequence, read N- to C-terminus: Dihydroorotase (430 aa).

Zn(2+) is bound by residues H60 and H62. Residues 62 to 64 (HFR) and N94 contribute to the substrate site. Zn(2+) is bound by residues D151, H178, and H231. N277 serves as a coordination point for substrate. D304 is a binding site for Zn(2+). The active site involves D304. Substrate contacts are provided by residues H308 and 322–323 (FG).

This sequence belongs to the metallo-dependent hydrolases superfamily. DHOase family. Class I DHOase subfamily. The cofactor is Zn(2+).

It carries out the reaction (S)-dihydroorotate + H2O = N-carbamoyl-L-aspartate + H(+). Its pathway is pyrimidine metabolism; UMP biosynthesis via de novo pathway; (S)-dihydroorotate from bicarbonate: step 3/3. In terms of biological role, catalyzes the reversible cyclization of carbamoyl aspartate to dihydroorotate. In Carboxydothermus hydrogenoformans (strain ATCC BAA-161 / DSM 6008 / Z-2901), this protein is Dihydroorotase.